The following is a 610-amino-acid chain: Methionine--tRNA ligase (610 aa).

Residues 12–22 carry the 'HIGH' region motif; the sequence is PYANGPRHIGH. 4 residues coordinate Zn(2+): C144, C147, C157, and C160. Positions 348–352 match the 'KMSKS' region motif; that stretch reads KFSSS. Position 351 (S351) interacts with ATP.

It belongs to the class-I aminoacyl-tRNA synthetase family. MetG type 1 subfamily. In terms of assembly, monomer. Zn(2+) is required as a cofactor.

The protein localises to the cytoplasm. The catalysed reaction is tRNA(Met) + L-methionine + ATP = L-methionyl-tRNA(Met) + AMP + diphosphate. In terms of biological role, is required not only for elongation of protein synthesis but also for the initiation of all mRNA translation through initiator tRNA(fMet) aminoacylation. The chain is Methionine--tRNA ligase from Corynebacterium diphtheriae (strain ATCC 700971 / NCTC 13129 / Biotype gravis).